Here is a 524-residue protein sequence, read N- to C-terminus: MLPNTGKLAGCTVFITGASRGIGKAIALKAAKDGANIVIAAKTTQRHPKLLGTIYTAAEEIEAAGGKALPCVVDVRDEQQINSAVEKAVERFGGIDILVNNASAISLTNTLETPTKRVDLMMSVNTRGTYLTSKACIPFLKKSKVAHILNLSPPLNLNPMWFKQHCAYTIAKYGMSMCVLGMAEEFRGEIAVNALWPRTAIHTAAMDMLGGAGVESQCRKVDIIADAAYSIFKRPKSFTGNFIIDENILKEEGIKDFDIYAITPGHPLLPDFFLDEHPDAVMEEKESYDPVPEVKEEKLQLQEQPQLQEQPQLQEKPQLQEQPQLQEKPQLQEQPQLQEQPQLQEQPQQQPQLQEQPQLQEKPQLQEQPQQQEKPQPQQQPQQQPQQRPQQRPQPQPQPQPLLQSVLPPKPHFGAVEETFRIVKDSLSDEVVRATQAVYQFELSGEDGGTWFLDLKSKGGKVGHGEPSDRADVVMSMATEDFVKMFSGKLKPTMAFMSGKLKIKGNIALAIKLEKLMTHMNSRL.

Residues 17–23 (GASRGIG), Lys42, and Asp74 each bind NADP(+). Lys42 bears the N6-(2-hydroxyisobutyryl)lysine mark. An N6-acetyllysine modification is found at Lys116. Residue Tyr168 is the Proton acceptor of the active site. Residue Lys172 participates in NADP(+) binding. Residues 283 to 300 (EEKESYDPVPEVKEEKLQ) show a composition bias toward basic and acidic residues. Residues 283–410 (EEKESYDPVP…PLLQSVLPPK (128 aa)) are disordered. A compositionally biased stretch (low complexity) spans 301–391 (LQEQPQLQEQ…QQQPQQRPQQ (91 aa)). Residues 414-521 (GAVEETFRIV…KLEKLMTHMN (108 aa)) enclose the SCP2 domain. An N6-succinyllysine modification is found at Lys424.

This sequence belongs to the short-chain dehydrogenases/reductases (SDR) family.

Its subcellular location is the peroxisome. It localises to the mitochondrion. Has apparently no steroid dehydrogenase activity. Controls bile acid (BA) and lipid metabolism in response to nutritional cues. The protein is Hydroxysteroid dehydrogenase-like protein 2 (Hsdl2) of Rattus norvegicus (Rat).